Consider the following 399-residue polypeptide: Phosphoglycerate kinase (399 aa).

Residues 21–23 (DFN), R36, 59–62 (HLGR), R120, and R158 each bind substrate. Residues K209, G297, E328, and 355–358 (GGDS) each bind ATP.

The protein belongs to the phosphoglycerate kinase family. Monomer.

It localises to the cytoplasm. It catalyses the reaction (2R)-3-phosphoglycerate + ATP = (2R)-3-phospho-glyceroyl phosphate + ADP. It functions in the pathway carbohydrate degradation; glycolysis; pyruvate from D-glyceraldehyde 3-phosphate: step 2/5. This Streptococcus suis (strain 05ZYH33) protein is Phosphoglycerate kinase.